The primary structure comprises 430 residues: Tyrosine--tRNA ligase (430 aa).

Tyr32 serves as a coordination point for L-tyrosine. Positions 37 to 46 (PTADSLHIGH) match the 'HIGH' region motif. Positions 172 and 176 each coordinate L-tyrosine. The 'KMSKS' region signature appears at 232–236 (KFGKT). Lys235 serves as a coordination point for ATP. Residues 362–429 (VKAVDLFVDN…GKKNYYLIIA (68 aa)) enclose the S4 RNA-binding domain.

Belongs to the class-I aminoacyl-tRNA synthetase family. TyrS type 1 subfamily. Homodimer.

The protein localises to the cytoplasm. It catalyses the reaction tRNA(Tyr) + L-tyrosine + ATP = L-tyrosyl-tRNA(Tyr) + AMP + diphosphate + H(+). In terms of biological role, catalyzes the attachment of tyrosine to tRNA(Tyr) in a two-step reaction: tyrosine is first activated by ATP to form Tyr-AMP and then transferred to the acceptor end of tRNA(Tyr). The protein is Tyrosine--tRNA ligase of Bacteroides fragilis (strain ATCC 25285 / DSM 2151 / CCUG 4856 / JCM 11019 / LMG 10263 / NCTC 9343 / Onslow / VPI 2553 / EN-2).